We begin with the raw amino-acid sequence, 471 residues long: Phosphatidylinositol 4-kinase type 2-alpha (471 aa).

Disordered regions lie at residues 1-25 (MDET…QCSP) and 48-101 (PGSA…PDDP). Over residues 90 to 101 (AERERNKFPDDP) the composition is skewed to basic and acidic residues. Residues 117–445 (DILPERISQG…VQTPPVIVET (329 aa)) enclose the PI3K/PI4K catalytic domain. A G-loop region spans residues 123–129 (ISQGSSG). ATP is bound by residues 124–130 (SQGSSGS) and K145. Residues 150–152 (EPY) are important for substrate binding. The interval 158–171 (KWTKWLQKLCCPCC) is important for interaction with membranes. S-palmitoyl cysteine attachment occurs at residues C167, C168, C170, and C171. Residue 254–257 (QLFV) participates in ATP binding. An important for interaction with membranes region spans residues 261–269 (KDADYWLRR). Residues 298 to 306 (RNTDRGNDN) are catalytic loop. The segment at 336–356 (AIDNGLAFPLKHPDSWRAYPF) is activation loop. D338 contacts ATP. An important for interaction with membranes region spans residues 351-360 (WRAYPFYWAW).

Belongs to the PI3/PI4-kinase family. Type II PI4K subfamily.

The protein localises to the golgi apparatus. It localises to the trans-Golgi network membrane. It is found in the membrane raft. The protein resides in the endosome. Its subcellular location is the endosome membrane. The protein localises to the cytoplasmic vesicle. It localises to the cell projection. It is found in the dendrite. The protein resides in the presynaptic cell membrane. Its subcellular location is the synapse. The protein localises to the synaptosome. It localises to the mitochondrion. It is found in the membrane. The protein resides in the cell membrane. Its subcellular location is the perikaryon. The protein localises to the neuron projection. It carries out the reaction a 1,2-diacyl-sn-glycero-3-phospho-(1D-myo-inositol) + ATP = a 1,2-diacyl-sn-glycero-3-phospho-(1D-myo-inositol 4-phosphate) + ADP + H(+). Membrane-bound phosphatidylinositol-4 kinase (PI4-kinase) that catalyzes the phosphorylation of phosphatidylinositol (PI) to phosphatidylinositol 4-phosphate (PI4P), a lipid that plays important roles in endocytosis, Golgi function, protein sorting and membrane trafficking. Besides, phosphorylation of phosphatidylinositol (PI) to phosphatidylinositol 4-phosphate (PI4P) is the first committed step in the generation of phosphatidylinositol 4,5-bisphosphate (PIP2), a precursor of the second messenger inositol 1,4,5-trisphosphate (InsP3). This chain is Phosphatidylinositol 4-kinase type 2-alpha (pi4k2a), found in Xenopus tropicalis (Western clawed frog).